Reading from the N-terminus, the 825-residue chain is NT-3 growth factor receptor (825 aa).

An N-terminal signal peptide occupies residues 1–31 (MDVSLCPAKCSFWRIFLLGSVWLDYVGSVLA). Cystine bridges form between C32–C38 and C36–C45. The Extracellular segment spans residues 32–429 (CPANCVCSKT…TVTHKPEEDT (398 aa)). N-linked (GlcNAc...) asparagine glycans are attached at residues N68, N72, and N79. LRR repeat units lie at residues 104 to 125 (GLQK…AFAK) and 128 to 149 (HLRY…LFQT). 2 N-linked (GlcNAc...) asparagine glycosylation sites follow: N133 and N163. Residues 160-209 (NFFNCSCDIRWMQLWQEQGEAKLNSQNLYCINTDGSQLPLFRMNISQCDL) form the LRRCT domain. Intrachain disulfides connect C164–C189 and C166–C207. N-linked (GlcNAc...) asparagine glycosylation is found at N203, N218, N232, N259, N267, N272, and N294. Ig-like C2-type domains are found at residues 210–300 (PEIS…VALT) and 309–382 (SLEE…IAKN). C231 and C284 form a disulfide bridge. Residues C320 and C362 are joined by a disulfide bond. N-linked (GlcNAc...) asparagine glycans are attached at residues N375 and N388. A helical membrane pass occupies residues 430 to 453 (FGVSIAVGLAAFACVLLVVLFVMI). The Cytoplasmic portion of the chain corresponds to 454-825 (NKYGRRSKFG…ATPIYLDILG (372 aa)). S493 carries the phosphoserine modification. Y516 bears the Phosphotyrosine; by autocatalysis mark. One can recognise a Protein kinase domain in the interval 538 to 825 (IVLKRELGEG…ATPIYLDILG (288 aa)). ATP-binding positions include 544-552 (LGEGAFGKV) and K572. Catalysis depends on D679, which acts as the Proton acceptor. Phosphotyrosine; by autocatalysis occurs at positions 705, 709, and 710.

It belongs to the protein kinase superfamily. Tyr protein kinase family. Insulin receptor subfamily. As to quaternary structure, exists in a dynamic equilibrium between monomeric (low affinity) and dimeric (high affinity) structures. Binds SH2B2. Interacts with SQSTM1 and KIDINS220. Interacts with PTPRS. Interacts with MAPK8IP3/JIP3. Ligand-mediated auto-phosphorylation.

The protein resides in the membrane. The enzyme catalyses L-tyrosyl-[protein] + ATP = O-phospho-L-tyrosyl-[protein] + ADP + H(+). Its function is as follows. Receptor tyrosine kinase involved in nervous system and probably heart development. Upon binding of its ligand NTF3/neurotrophin-3, NTRK3 autophosphorylates and activates different signaling pathways, including the phosphatidylinositol 3-kinase/AKT and the MAPK pathways, that control cell survival and differentiation. The chain is NT-3 growth factor receptor (NTRK3) from Pan troglodytes (Chimpanzee).